We begin with the raw amino-acid sequence, 101 residues long: Small ribosomal subunit protein uS14A (101 aa).

The tract at residues 35–56 (TSSYEQRLDAQRALSRQPRDAS) is disordered.

This sequence belongs to the universal ribosomal protein uS14 family. In terms of assembly, part of the 30S ribosomal subunit. Contacts proteins S3 and S10.

In terms of biological role, binds 16S rRNA, required for the assembly of 30S particles and may also be responsible for determining the conformation of the 16S rRNA at the A site. This chain is Small ribosomal subunit protein uS14A, found in Mycobacterium marinum (strain ATCC BAA-535 / M).